A 456-amino-acid chain; its full sequence is Histidine--tRNA ligase (456 aa).

It belongs to the class-II aminoacyl-tRNA synthetase family. As to quaternary structure, homodimer.

Its subcellular location is the cytoplasm. The enzyme catalyses tRNA(His) + L-histidine + ATP = L-histidyl-tRNA(His) + AMP + diphosphate + H(+). The polypeptide is Histidine--tRNA ligase (hisS) (Borreliella burgdorferi (strain ATCC 35210 / DSM 4680 / CIP 102532 / B31) (Borrelia burgdorferi)).